The chain runs to 292 residues: RNA 5'-monophosphate methyltransferase (292 aa).

The disordered stretch occupies residues 1 to 20; the sequence is MAVPTELHGGSVKETAAEKE. S-adenosyl-L-methionine is bound by residues arginine 46, asparagine 76, aspartate 110, 135–136, and methionine 164; that span reads DF. One can recognise a Bin3-type SAM domain in the interval 53-274; that stretch reads ELLRQLFPES…KQTIETHPIP (222 aa).

It belongs to the methyltransferase superfamily. As to quaternary structure, interacts with DICER1; the interaction may be mediated by RNA.

The protein resides in the cytoplasm. It catalyses the reaction a 5'-end 5'-phospho-ribonucleoside-RNA + S-adenosyl-L-methionine = a 5'-end (5'-methylphospho)-ribonucleoside-RNA + S-adenosyl-L-homocysteine. The catalysed reaction is a 5'-end 5'-phospho-ribonucleoside-RNA + 2 S-adenosyl-L-methionine = a 5'-end (5'-bismethylphospho)-ribonucleoside-RNA + 2 S-adenosyl-L-homocysteine. Its function is as follows. O-methyltransferase that specifically monomethylates 5'-monophosphate of cytoplasmic histidyl tRNA (tRNA(His)), acting as a capping enzyme by protecting tRNA(His) from cleavage by DICER1. Also able, with less efficiently, to methylate the 5' monophosphate of a subset of pre-miRNAs, acting as a negative regulator of miRNA processing. The 5' monophosphate of pre-miRNAs is recognized by DICER1 and is required for pre-miRNAs processing: methylation at this position reduces the processing of pre-miRNAs by DICER1. Was also reported to mediate dimethylation of pre-miR-145; however dimethylation cannot be reproduced by another group which observes a monomethylation of pre-miR-145. The chain is RNA 5'-monophosphate methyltransferase (BCDIN3D) from Pongo abelii (Sumatran orangutan).